Consider the following 391-residue polypeptide: Formate-dependent phosphoribosylglycinamide formyltransferase (391 aa).

N(1)-(5-phospho-beta-D-ribosyl)glycinamide contacts are provided by residues 20 to 21 (EL) and glutamate 80. Residues arginine 112, lysine 153, 158–163 (SSGKGQ), 193–196 (EGFV), and glutamate 201 contribute to the ATP site. The 190-residue stretch at 117-306 (RLAAEELQLP…EFALHVRAFT (190 aa)) folds into the ATP-grasp domain. Positions 265 and 277 each coordinate Mg(2+). N(1)-(5-phospho-beta-D-ribosyl)glycinamide is bound by residues aspartate 284, lysine 354, and 361 to 362 (RR).

It belongs to the PurK/PurT family. As to quaternary structure, homodimer.

It catalyses the reaction N(1)-(5-phospho-beta-D-ribosyl)glycinamide + formate + ATP = N(2)-formyl-N(1)-(5-phospho-beta-D-ribosyl)glycinamide + ADP + phosphate + H(+). The protein operates within purine metabolism; IMP biosynthesis via de novo pathway; N(2)-formyl-N(1)-(5-phospho-D-ribosyl)glycinamide from N(1)-(5-phospho-D-ribosyl)glycinamide (formate route): step 1/1. Involved in the de novo purine biosynthesis. Catalyzes the transfer of formate to 5-phospho-ribosyl-glycinamide (GAR), producing 5-phospho-ribosyl-N-formylglycinamide (FGAR). Formate is provided by PurU via hydrolysis of 10-formyl-tetrahydrofolate. The polypeptide is Formate-dependent phosphoribosylglycinamide formyltransferase (Aliivibrio fischeri (strain ATCC 700601 / ES114) (Vibrio fischeri)).